We begin with the raw amino-acid sequence, 298 residues long: Tyrosine recombinase XerC (298 aa).

The region spanning T2–V88 is the Core-binding (CB) domain. The 180-residue stretch at H109–D288 folds into the Tyr recombinase domain. Active-site residues include R148, K172, H240, R243, and H266. The active-site O-(3'-phospho-DNA)-tyrosine intermediate is the Y275.

Belongs to the 'phage' integrase family. XerC subfamily. As to quaternary structure, forms a cyclic heterotetrameric complex composed of two molecules of XerC and two molecules of XerD, in which XerC interacts with XerD via its C-terminal region, XerD interacts with XerC via its C-terminal region and so on.

The protein localises to the cytoplasm. Its activity is regulated as follows. FtsK may regulate the catalytic switch between XerC and XerD in the heterotetrameric complex during the two steps of the recombination process. Site-specific tyrosine recombinase, which acts by catalyzing the cutting and rejoining of the recombining DNA molecules. Binds cooperatively to specific DNA consensus sequences that are separated from XerD binding sites by a short central region, forming the heterotetrameric XerC-XerD complex that recombines DNA substrates. The complex is essential to convert dimers of the bacterial chromosome into monomers to permit their segregation at cell division. It also contributes to the segregational stability of plasmids. In the complex XerC specifically exchanges the top DNA strands. The protein is Tyrosine recombinase XerC of Escherichia coli O157:H7.